The following is a 252-amino-acid chain: Sororin (252 aa).

2 disordered regions span residues 1-48 (MSGR…WPKT) and 72-142 (AVQS…SKKV). Phosphoserine occurs at positions 21, 33, 35, 75, 79, and 83. Over residues 86 to 104 (LEKENEPPGRELTKEDLFK) the composition is skewed to basic and acidic residues. Positions 88 to 90 (KEN) match the KEN box motif. A Phosphothreonine modification is found at threonine 98. Positions 105–116 (THSVPATPTSTP) are enriched in low complexity. At serine 107 the chain carries Phosphoserine. A phosphothreonine mark is found at threonine 111 and threonine 115. A compositionally biased stretch (basic and acidic residues) spans 124–140 (SSSKEGELDARDLEMSK). Serine 154 is modified (phosphoserine). Residue threonine 159 is modified to Phosphothreonine. Residues 166–168 (FGF) carry the FGF motif motif. Positions 199–222 (WAPDMTLPGISPPPEKQKRKKKKM) are disordered. A Phosphoserine modification is found at serine 209. The interval 230 to 252 (LDEWAAAMNAEFEAAEQFDLLVE) is C-terminal Sororin domain.

This sequence belongs to the sororin family. In terms of assembly, interacts with the APC/C complex. Interacts with the chromatin-bound cohesin complex; the interaction is indirect, occurs after DNA replication and requires acetylation of the cohesin component SMC3. Interacts (via the FGF motif) with PDS5A and PDS5B; the interaction is direct and prevents the interaction of PDS5A with WAPL. Post-translationally, phosphorylated. Phosphorylation, as cells enter mitosis, disrupts the interaction with PDS5A and relieves the inhibition of WAPL by CDCA5. In terms of processing, ubiquitinated by the APC/C complex in G1, leading to its degradation.

Its subcellular location is the nucleus. The protein localises to the chromosome. The protein resides in the cytoplasm. Functionally, regulator of sister chromatid cohesion in mitosis stabilizing cohesin complex association with chromatin. May antagonize the action of WAPL which stimulates cohesin dissociation from chromatin. Cohesion ensures that chromosome partitioning is accurate in both meiotic and mitotic cells and plays an important role in DNA repair. Required for efficient DNA double-stranded break repair. This Homo sapiens (Human) protein is Sororin (CDCA5).